Reading from the N-terminus, the 626-residue chain is Methanol dehydrogenase [cytochrome c] subunit 1 (626 aa).

Residues 1-27 form the signal peptide; that stretch reads MSRFVTSVSALAMLALAPAALSSGAYA. Cysteine 130 and cysteine 131 are disulfide-bonded. The Ca(2+) site is built by glutamate 204 and asparagine 288. Aspartate 330 (proton acceptor) is an active-site residue. Cysteines 413 and 442 form a disulfide.

It belongs to the bacterial PQQ dehydrogenase family. As to quaternary structure, heterotetramer composed of 2 alpha and 2 beta subunits. Pyrroloquinoline quinone serves as cofactor. It depends on Ca(2+) as a cofactor.

The protein resides in the cell inner membrane. The catalysed reaction is 2 Fe(III)-[cytochrome cL] + a primary alcohol = 2 Fe(II)-[cytochrome cL] + an aldehyde + 2 H(+). In terms of biological role, catalyzes the oxidation of primary alcohols including methanol. This is Methanol dehydrogenase [cytochrome c] subunit 1 (moxF) from Methylorubrum extorquens (strain ATCC 14718 / DSM 1338 / JCM 2805 / NCIMB 9133 / AM1) (Methylobacterium extorquens).